Consider the following 388-residue polypeptide: Succinate--CoA ligase [ADP-forming] subunit beta (388 aa).

Residues 9–245 (KELLASYGLP…KSQENERELK (237 aa)) enclose the ATP-grasp domain. ATP-binding positions include K46, 53–55 (GRG), E100, Y103, and E108. N200 and D214 together coordinate Mg(2+). Substrate-binding positions include N265 and 322 to 324 (GIV).

This sequence belongs to the succinate/malate CoA ligase beta subunit family. As to quaternary structure, heterotetramer of two alpha and two beta subunits. Mg(2+) is required as a cofactor.

It catalyses the reaction succinate + ATP + CoA = succinyl-CoA + ADP + phosphate. The enzyme catalyses GTP + succinate + CoA = succinyl-CoA + GDP + phosphate. The protein operates within carbohydrate metabolism; tricarboxylic acid cycle; succinate from succinyl-CoA (ligase route): step 1/1. In terms of biological role, succinyl-CoA synthetase functions in the citric acid cycle (TCA), coupling the hydrolysis of succinyl-CoA to the synthesis of either ATP or GTP and thus represents the only step of substrate-level phosphorylation in the TCA. The beta subunit provides nucleotide specificity of the enzyme and binds the substrate succinate, while the binding sites for coenzyme A and phosphate are found in the alpha subunit. The protein is Succinate--CoA ligase [ADP-forming] subunit beta of Neisseria meningitidis serogroup B (strain ATCC BAA-335 / MC58).